Reading from the N-terminus, the 196-residue chain is Beta-crystallin A2 (196 aa).

An N-terminal arm region spans residues 1–11 (MTSEAMDTLGQ). Beta/gamma crystallin 'Greek key' domains follow at residues 12 to 51 (YKIT…KVES) and 52 to 98 (GPWV…RPVK). The connecting peptide stretch occupies residues 99 to 104 (CANHND). 2 Beta/gamma crystallin 'Greek key' domains span residues 105–146 (SKAI…KVNA) and 147–195 (GAWV…RRIQ).

This sequence belongs to the beta/gamma-crystallin family. Homo/heterodimer, or complexes of higher-order. The structure of beta-crystallin oligomers seems to be stabilized through interactions between the N-terminal arms.

Crystallins are the dominant structural components of the vertebrate eye lens. The chain is Beta-crystallin A2 (CRYBA2) from Gallus gallus (Chicken).